Reading from the N-terminus, the 135-residue chain is Small ribosomal subunit protein uS12 (135 aa).

D89 carries the post-translational modification 3-methylthioaspartic acid. Residues 106 to 135 (GVANRRQSRSKYGAKRPKAGAAQATKGGKK) are disordered. The span at 111–123 (RQSRSKYGAKRPK) shows a compositional bias: basic residues. Low complexity predominate over residues 124 to 135 (AGAAQATKGGKK).

The protein belongs to the universal ribosomal protein uS12 family. As to quaternary structure, part of the 30S ribosomal subunit. Contacts proteins S8 and S17. May interact with IF1 in the 30S initiation complex.

Its function is as follows. With S4 and S5 plays an important role in translational accuracy. Functionally, interacts with and stabilizes bases of the 16S rRNA that are involved in tRNA selection in the A site and with the mRNA backbone. Located at the interface of the 30S and 50S subunits, it traverses the body of the 30S subunit contacting proteins on the other side and probably holding the rRNA structure together. The combined cluster of proteins S8, S12 and S17 appears to hold together the shoulder and platform of the 30S subunit. This Hydrogenobaculum sp. (strain Y04AAS1) protein is Small ribosomal subunit protein uS12.